A 132-amino-acid chain; its full sequence is Histone H2A.2 (132 aa).

This sequence belongs to the histone H2A family. As to quaternary structure, the nucleosome is a histone octamer containing two molecules each of H2A, H2B, H3 and H4 assembled in one H3-H4 heterotetramer and two H2A-H2B heterodimers. The octamer wraps approximately 147 bp of DNA.

It is found in the nucleus. It localises to the chromosome. Its function is as follows. Core component of nucleosome. Nucleosomes wrap and compact DNA into chromatin, limiting DNA accessibility to the cellular machineries which require DNA as a template. Histones thereby play a central role in transcription regulation, DNA repair, DNA replication and chromosomal stability. DNA accessibility is regulated via a complex set of post-translational modifications of histones, also called histone code, and nucleosome remodeling. The chain is Histone H2A.2 from Leishmania infantum.